The sequence spans 414 residues: MIKAVKGTRDLLPPSTEVWNRVEQVARAIFRAYNYHEIRTPIFEETQLFSRGVGTETDIVTKEMYTFEDRDGSSLTLRPENTASVIRAYIEHRLDQRPGVQKLYYIGPMFRRERPQKGRYRQFFQIGAEAIGSESPVVDAEVIELVVEILKGVGLSGFKLLINSVGDHNCRPQYVEKLKAELKDKAAGMCGDCQRRAETNPLRVLDCKVEADQPIIDALPSIVDYLCEPCRAHFEAVKSYLTDRGIEYEVRPRMVRGLDYYMRTTFEVVHGALGAQNSVLGGGRYDGLAESLGSRVHAPGIGFSIGEDRLVMSVEGDQPASQLDLCIAPLGEAAVRHAAILARDFRRSGHSVELVEGKLKRAMELANKFGARYTLIIGDNEIAAGRYALKNMATGEQVELTRDEIAARLDAASN.

The protein belongs to the class-II aminoacyl-tRNA synthetase family. Homodimer.

The protein resides in the cytoplasm. It carries out the reaction tRNA(His) + L-histidine + ATP = L-histidyl-tRNA(His) + AMP + diphosphate + H(+). This Solibacter usitatus (strain Ellin6076) protein is Histidine--tRNA ligase.